Here is a 570-residue protein sequence, read N- to C-terminus: Sulfite reductase [NADPH] hemoprotein beta-component (570 aa).

Positions 434, 440, 479, and 483 each coordinate [4Fe-4S] cluster. Siroheme is bound at residue Cys483.

It belongs to the nitrite and sulfite reductase 4Fe-4S domain family. As to quaternary structure, alpha(8)-beta(8). The alpha component is a flavoprotein, the beta component is a hemoprotein. The cofactor is siroheme. [4Fe-4S] cluster serves as cofactor.

The enzyme catalyses hydrogen sulfide + 3 NADP(+) + 3 H2O = sulfite + 3 NADPH + 4 H(+). It participates in sulfur metabolism; hydrogen sulfide biosynthesis; hydrogen sulfide from sulfite (NADPH route): step 1/1. Its function is as follows. Component of the sulfite reductase complex that catalyzes the 6-electron reduction of sulfite to sulfide. This is one of several activities required for the biosynthesis of L-cysteine from sulfate. The sequence is that of Sulfite reductase [NADPH] hemoprotein beta-component from Salmonella schwarzengrund (strain CVM19633).